The primary structure comprises 363 residues: 2,5-diketocamphane 1,2-monooxygenase 1 (363 aa).

FMN contacts are provided by residues Met74 and 186 to 194 (TGLTKNSSS).

It belongs to the bacterial luciferase oxidoreductase family. As to quaternary structure, homodimer. Likely forms a loose transient complex with a P.putida flavin reductase that provides the required FMNH(2) to the enzyme.

It catalyses the reaction (1R,4R)-bornane-2,5-dione + FMNH2 + O2 = (1R,4R)-5-oxo-1,2-campholide + FMN + H2O + H(+). It functions in the pathway terpene metabolism; (R)-camphor degradation. Its function is as follows. Involved in the degradation and assimilation of (+)-camphor, which allows P.putida strain NCIMB 10007 to grow on this enantiomer of camphor as the sole carbon source. Catalyzes the FMNH(2)-dependent lactonization of 2,5-diketocamphane via a Baeyer-Villiger oxidation to produce the unstable lactone 5-oxo-1,2-campholide with (R,R) configuration, that presumably undergoes spontaneous hydrolysis to form 2-oxo-Delta(3)-4,5,5-trimethylcyclopentenylacetate. Is also able to convert (+)-camphor and norcamphor to the corresponding lactone in vitro. Shows no conversion of (-)-camphor, (+)-fenchone, (-)-fenchone, and (+)-nopinone. Acts only on bicyclic ketones; is not active towards monocyclic ketones, aromatic ketones, the aliphatic 2-decanone, 1-indanone and progesterone. The sequence is that of 2,5-diketocamphane 1,2-monooxygenase 1 from Pseudomonas putida (Arthrobacter siderocapsulatus).